An 87-amino-acid polypeptide reads, in one-letter code: UPF0250 protein CKO_02527 (87 aa).

Belongs to the UPF0250 family.

In Citrobacter koseri (strain ATCC BAA-895 / CDC 4225-83 / SGSC4696), this protein is UPF0250 protein CKO_02527.